Here is a 448-residue protein sequence, read N- to C-terminus: Keratin, type I cytoskeletal 27 (448 aa).

Positions 1-73 (MSVRFSSASR…ANEHGLLSGN (73 aa)) are head. The interval 74–109 (EKVTMQNLNDRLASYLENVQALEEANADLEQKIKDW) is coil 1A. The region spanning 74–389 (EKVTMQNLND…RLIDGDEGSC (316 aa)) is the IF rod domain. The tract at residues 110–131 (YEKFGPGSCRGLDHDYSRYFPI) is linker 1. The interval 132–223 (IDDLRTQIIS…KNHEEEMQAL (92 aa)) is coil 1B. The segment at 224–246 (QCAAGGNVNVEMNAAPGVDLTVL) is linker 12. The tract at residues 247-385 (LNNMRAEYEA…ETYCRLIDGD (139 aa)) is coil 2. Residues 386-448 (EGSCVKAKGQ…VNKTEQRIPS (63 aa)) are tail. Residues 427-448 (SRVHTLEEKSTKVNKTEQRIPS) are disordered. Basic and acidic residues predominate over residues 430–448 (HTLEEKSTKVNKTEQRIPS).

Belongs to the intermediate filament family. Heterotetramer of two type I and two type II keratins. Interacts with KRT6A to form filaments. As to expression, expressed in skin. Expressed in the Henle layer and cuticle of the irs in hair follicle bulb. In the hair follicle, expression was observed in all layers of the irs but was stronger in the Henle layer and cuticle than the Huxley layer until the Henle layer differentiated (at protein level).

It localises to the cytoplasm. Its function is as follows. Essential for the proper assembly of type I and type II keratin protein complexes and formation of keratin intermediate filaments in the inner root sheath (irs). The protein is Keratin, type I cytoskeletal 27 of Mus musculus (Mouse).